The primary structure comprises 328 residues: N-acyl-aromatic-L-amino acid amidohydrolase (carboxylate-forming) A (328 aa).

Zn(2+)-binding residues include H30 and E33. Substrate-binding positions include R74 and 81 to 82; that span reads NR. Residue H127 participates in Zn(2+) binding. The substrate site is built by E189 and Y300.

It belongs to the AspA/AstE family. Aspartoacylase subfamily. Homotetramer. Zn(2+) is required as a cofactor.

Its subcellular location is the apical cell membrane. The protein resides in the cytoplasm. It catalyses the reaction an N-acyl-aromatic L-alpha-amino acid + H2O = an aromatic L-alpha-amino acid + a carboxylate. The enzyme catalyses an N-acetyl-L-cysteine-S-conjugate + H2O = an S-substituted L-cysteine + acetate. In terms of biological role, plays an important role in deacetylating mercapturic acids in kidney proximal tubules. This is N-acyl-aromatic-L-amino acid amidohydrolase (carboxylate-forming) A (acy3.1) from Danio rerio (Zebrafish).